We begin with the raw amino-acid sequence, 91 residues long: Acylphosphatase (91 aa).

The Acylphosphatase-like domain occupies 3 to 89 (AKHLILSGRV…PAEPGFVKRA (87 aa)). Catalysis depends on residues Arg-18 and Asn-36.

This sequence belongs to the acylphosphatase family.

The catalysed reaction is an acyl phosphate + H2O = a carboxylate + phosphate + H(+). The protein is Acylphosphatase (acyP) of Acidiphilium cryptum (strain JF-5).